A 128-amino-acid chain; its full sequence is Small ribosomal subunit protein uS11m (128 aa).

Belongs to the universal ribosomal protein uS11 family.

The protein resides in the mitochondrion. The chain is Small ribosomal subunit protein uS11m (RPS11) from Prototheca wickerhamii.